The following is a 445-amino-acid chain: Aminopeptidase S (445 aa).

An N-terminal signal peptide occupies residues 1-45 (MRPNRFSLRRSPTAVAAVALAAVLAAGAPAAQAAGAAAPTAAAAA). Ca(2+)-binding residues include Asp-48 and Ile-49. Zn(2+) is bound by residues His-130 and Asp-142. Residue Glu-176 is the Proton acceptor of the active site. Residues Glu-177, Asp-205, and His-292 each coordinate Zn(2+). Cys-290 and Cys-295 are joined by a disulfide. Residues Asp-307 and Asp-311 each contribute to the Ca(2+) site. Residues 325–445 (GEPPTGEGVF…GYIDSWKLTF (121 aa)) enclose the P/Homo B domain. A propeptide spans 330 to 445 (GEGVFSNTTD…GYIDSWKLTF (116 aa)) (removed in mature form).

The protein belongs to the peptidase M28 family. M28A subfamily. Monomer. Ca(2+) is required as a cofactor. Zn(2+) serves as cofactor. It depends on Mn(2+) as a cofactor. Requires Co(2+) as cofactor.

The protein resides in the secreted. It carries out the reaction Release of an N-terminal amino acid with a preference for large hydrophobic amino-terminus residues.. Calcium activates the enzyme, inhibited by 1,10-phenanthroline, EDTA and EGTA. End-product inhibited by L-amino acids. Non-competitively inhibited by NaF and NaH(2)PO(4). Its function is as follows. An exopeptidase specific for larger hydrophobic amino acids (especially leucine), no cleavage occurs if the next residue is proline. The polypeptide is Aminopeptidase S (Streptomyces griseus subsp. griseus (strain JCM 4626 / CBS 651.72 / NBRC 13350 / KCC S-0626 / ISP 5235)).